We begin with the raw amino-acid sequence, 66 residues long: UPF0337 protein BT9727_0908 (66 aa).

The interval Met1–Lys22 is disordered. Over residues Lys13–Lys22 the composition is skewed to basic and acidic residues.

The protein belongs to the UPF0337 (CsbD) family.

The chain is UPF0337 protein BT9727_0908 from Bacillus thuringiensis subsp. konkukian (strain 97-27).